Consider the following 219-residue polypeptide: MTESHIDFRRAKFLISAPDIAHLDQYLPGDVGVEIAFAGRSNAGKSSALNALTEQKNLARTSKTPGRTQLINVFELDAQRRLVDLPGYGFAQVPLAMKLKWQQSLGEYLQKRACLSGVVVLMDIRHPLKDLDMQMIEWAVASEIPVLALLTKSDKLAQSAKMKTVNEVRKALVEFGDWVQVEPFSALKGTGKPKVLSILNEWCHPQWLADELENQEDAE.

The region spanning 31 to 205 is the EngB-type G domain; sequence VGVEIAFAGR…LSILNEWCHP (175 aa). Residues 39–46, 66–70, 84–87, 151–154, and 184–186 each bind GTP; these read GRSNAGKS, GRTQL, DLPG, TKSD, and FSA. Mg(2+)-binding residues include S46 and T68.

This sequence belongs to the TRAFAC class TrmE-Era-EngA-EngB-Septin-like GTPase superfamily. EngB GTPase family. The cofactor is Mg(2+).

Functionally, necessary for normal cell division and for the maintenance of normal septation. This is Probable GTP-binding protein EngB from Shewanella sp. (strain MR-7).